A 151-amino-acid polypeptide reads, in one-letter code: S-ribosylhomocysteine lyase (151 aa).

Fe cation-binding residues include His-54, His-58, and Cys-121.

It belongs to the LuxS family. As to quaternary structure, homodimer. It depends on Fe cation as a cofactor.

It carries out the reaction S-(5-deoxy-D-ribos-5-yl)-L-homocysteine = (S)-4,5-dihydroxypentane-2,3-dione + L-homocysteine. Its function is as follows. Involved in the synthesis of autoinducer 2 (AI-2) which is secreted by bacteria and is used to communicate both the cell density and the metabolic potential of the environment. The regulation of gene expression in response to changes in cell density is called quorum sensing. Catalyzes the transformation of S-ribosylhomocysteine (RHC) to homocysteine (HC) and 4,5-dihydroxy-2,3-pentadione (DPD). The chain is S-ribosylhomocysteine lyase from Clostridioides difficile (strain 630) (Peptoclostridium difficile).